A 73-amino-acid polypeptide reads, in one-letter code: Conotoxin MaI51 (73 aa).

Positions 1 to 19 (MQKLTILLLVAAVLLSTQA) are cleaved as a signal peptide. A propeptide spanning residues 20-41 (LNQEKRPKEMINVLSKGKTNAE) is cleaved from the precursor. A Pyrrolidone carboxylic acid modification is found at Q46. 3 disulfides stabilise this stretch: C47–C61, C54–C65, and C60–C69. The residue at position 72 (I72) is an Isoleucine amide.

It belongs to the conotoxin O2 superfamily. In terms of tissue distribution, expressed by the venom duct.

The protein resides in the secreted. The polypeptide is Conotoxin MaI51 (Conus marmoreus (Marble cone)).